A 216-amino-acid polypeptide reads, in one-letter code: MCLRIGGLNVDEFRKLLMKTGLVLVVLGHVSFIAAAVLHGTMLRFVATTRDAVVLQYCVVDILSVTSAIVVILAGISAVILSRYLPSTPLRWTVFSLSVACALLSLTCALGLLASIAVTFATKGRALLAPCTFENTELPTLAPDCPFDPTRIYSSSLCLWAISLIFCLAESMSAVRCAQLVHRLLELRPWWGKSCHHTIQASPEPLDGHDLLSCTS.

4 consecutive transmembrane segments (helical) span residues 22–42 (LVLV…HGTM), 62–82 (ILSV…VILS), 94–114 (VFSL…GLLA), and 155–175 (SSLC…MSAV).

This sequence belongs to the TMEM54 family.

The protein localises to the membrane. The protein is Transmembrane protein 54 (Tmem54) of Rattus norvegicus (Rat).